Consider the following 453-residue polypeptide: tRNA modification GTPase MnmE (453 aa).

Positions 22, 79, and 119 each coordinate (6S)-5-formyl-5,6,7,8-tetrahydrofolate. The TrmE-type G domain occupies 215 to 376 (GMKVVIAGRP…LKQHLKSLMG (162 aa)). Asn-225 provides a ligand contact to K(+). GTP contacts are provided by residues 225 to 230 (NAGKSS), 244 to 250 (TEIAGTT), 269 to 272 (DTAG), and 334 to 337 (NKAD). Ser-229 contacts Mg(2+). Thr-244, Ile-246, and Thr-249 together coordinate K(+). A Mg(2+)-binding site is contributed by Thr-250. Residue Lys-453 participates in (6S)-5-formyl-5,6,7,8-tetrahydrofolate binding.

This sequence belongs to the TRAFAC class TrmE-Era-EngA-EngB-Septin-like GTPase superfamily. TrmE GTPase family. In terms of assembly, homodimer. Heterotetramer of two MnmE and two MnmG subunits. K(+) serves as cofactor.

The protein resides in the cytoplasm. Its function is as follows. Exhibits a very high intrinsic GTPase hydrolysis rate. Involved in the addition of a carboxymethylaminomethyl (cmnm) group at the wobble position (U34) of certain tRNAs, forming tRNA-cmnm(5)s(2)U34. The protein is tRNA modification GTPase MnmE of Shewanella denitrificans (strain OS217 / ATCC BAA-1090 / DSM 15013).